The primary structure comprises 249 residues: MTHQPQQSPQFFLTAPSPCPYLEGQQERKVFTHLVGDKANEINDLLTQGGFRRSQNIAYRPACEVCRACISVRILAGEFEMTRNMRRVWSQNRDLIGRVHKAQPSTEQYALFRDYLDARHRSGGMSDMTVLDYAMMIEDTHVNTQIIEYRRRGPDSFMSAKGDGELIAVALTDVMADGLSMVYSFFSPHMQERSLGTYMILDHIEWARAAGLPHVYLGYWVEGSRKMQYKIRFTPQEHLGPRGWQRFEG.

It belongs to the R-transferase family. Bpt subfamily.

Its subcellular location is the cytoplasm. It carries out the reaction N-terminal L-glutamyl-[protein] + L-leucyl-tRNA(Leu) = N-terminal L-leucyl-L-glutamyl-[protein] + tRNA(Leu) + H(+). It catalyses the reaction N-terminal L-aspartyl-[protein] + L-leucyl-tRNA(Leu) = N-terminal L-leucyl-L-aspartyl-[protein] + tRNA(Leu) + H(+). Functions in the N-end rule pathway of protein degradation where it conjugates Leu from its aminoacyl-tRNA to the N-termini of proteins containing an N-terminal aspartate or glutamate. The chain is Aspartate/glutamate leucyltransferase from Brucella suis (strain ATCC 23445 / NCTC 10510).